The following is a 282-amino-acid chain: 4-diphosphocytidyl-2-C-methyl-D-erythritol kinase (282 aa).

Lys-12 is an active-site residue. Residue 95 to 105 participates in ATP binding; it reads PMGGGIGGGSS. The active site involves Asp-137.

Belongs to the GHMP kinase family. IspE subfamily.

It carries out the reaction 4-CDP-2-C-methyl-D-erythritol + ATP = 4-CDP-2-C-methyl-D-erythritol 2-phosphate + ADP + H(+). It functions in the pathway isoprenoid biosynthesis; isopentenyl diphosphate biosynthesis via DXP pathway; isopentenyl diphosphate from 1-deoxy-D-xylulose 5-phosphate: step 3/6. Functionally, catalyzes the phosphorylation of the position 2 hydroxy group of 4-diphosphocytidyl-2C-methyl-D-erythritol. The protein is 4-diphosphocytidyl-2-C-methyl-D-erythritol kinase of Pseudomonas paraeruginosa (strain DSM 24068 / PA7) (Pseudomonas aeruginosa (strain PA7)).